Reading from the N-terminus, the 210-residue chain is UPF0173 protein PYRAB01190 (210 aa).

The protein belongs to the UPF0173 family.

This Pyrococcus abyssi (strain GE5 / Orsay) protein is UPF0173 protein PYRAB01190.